A 366-amino-acid chain; its full sequence is Anhydro-N-acetylmuramic acid kinase (366 aa).

Position 10–17 (10–17) interacts with ATP; that stretch reads GTSMDGID.

It belongs to the anhydro-N-acetylmuramic acid kinase family.

It carries out the reaction 1,6-anhydro-N-acetyl-beta-muramate + ATP + H2O = N-acetyl-D-muramate 6-phosphate + ADP + H(+). It participates in amino-sugar metabolism; 1,6-anhydro-N-acetylmuramate degradation. The protein operates within cell wall biogenesis; peptidoglycan recycling. Its function is as follows. Catalyzes the specific phosphorylation of 1,6-anhydro-N-acetylmuramic acid (anhMurNAc) with the simultaneous cleavage of the 1,6-anhydro ring, generating MurNAc-6-P. Is required for the utilization of anhMurNAc either imported from the medium or derived from its own cell wall murein, and thus plays a role in cell wall recycling. This Legionella pneumophila (strain Lens) protein is Anhydro-N-acetylmuramic acid kinase.